A 571-amino-acid chain; its full sequence is Origin recognition complex subunit 5 (571 aa).

2 disordered regions span residues 90 to 142 and 404 to 430; these read DDEY…YDDD and QIYPPQQVPQQQKQQEKEKEKEKGRQL. Low complexity-rich tracts occupy residues 107 to 133 and 407 to 416; these read NNNNNNNNNNNNNNNNNNNNNNNNNND and PPQQVPQQQK. Over residues 417–428 the composition is skewed to basic and acidic residues; the sequence is QQEKEKEKEKGR.

It belongs to the ORC1 family. As to quaternary structure, ORC is composed of six subunits.

The protein localises to the nucleus. Component of the origin recognition complex (ORC) that binds origins of replication. DNA-binding is ATP-dependent, however specific DNA sequences that define origins of replication have not been identified so far. ORC is required to assemble the pre-replication complex necessary to initiate DNA replication. The protein is Origin recognition complex subunit 5 (orcE) of Dictyostelium discoideum (Social amoeba).